Consider the following 736-residue polypeptide: Prolyl oligopeptidase dbiP (736 aa).

Catalysis depends on charge relay system residues serine 572, aspartate 656, and histidine 692.

The protein belongs to the peptidase S9A family. As to quaternary structure, monomer.

It carries out the reaction Hydrolysis of Pro-|-Xaa &gt;&gt; Ala-|-Xaa in oligopeptides.. The protein operates within mycotoxin biosynthesis. Prolyl oligopeptidase; part of the gene cluster that mediates the biosynthesis of dendrothelin A, a highly methylated cyclic dodecapeptide showing slight nematodicidal activity. Excises and catalyzes the macrocyclization of the methylated core peptide of dbiMA to yield dendrothelin A. DbiP works in a two-step fashion with an initial cleavage at the N-terminus, followed by a second cleavage at the C-terminus of the core peptide. According to this mechanism, the free N-terminus of the core peptide, generated by the first cleavage, attacks the covalent intermediate of the second cleavage, which results in macrocyclization of the core peptide. This is Prolyl oligopeptidase dbiP from Dendrothele bispora (strain CBS 962.96).